A 370-amino-acid polypeptide reads, in one-letter code: Probable trehalose-phosphate phosphatase 6 (370 aa).

This sequence belongs to the trehalose phosphatase family. A divalent metal cation serves as cofactor.

It catalyses the reaction alpha,alpha-trehalose 6-phosphate + H2O = alpha,alpha-trehalose + phosphate. It functions in the pathway glycan biosynthesis; trehalose biosynthesis. Its function is as follows. Removes the phosphate from trehalose 6-phosphate to produce free trehalose. Trehalose accumulation in plant may improve abiotic stress tolerance. This Oryza sativa subsp. japonica (Rice) protein is Probable trehalose-phosphate phosphatase 6 (TPP6).